A 533-amino-acid chain; its full sequence is Zinc finger protein 692 (533 aa).

Disordered stretches follow at residues 124-251 and 290-310; these read SLIP…PATL and TESL…TCDE. Over residues 149-178 the composition is skewed to basic and acidic residues; that stretch reads EARRKQEAEGLECEHRERTQETRLSRRVEP. Residues 190–208 are compositionally biased toward acidic residues; sequence QVVEEEEEEEEEEEEEELL. Serine 233 is modified (phosphoserine). Residues 290–305 are compositionally biased toward polar residues; it reads TESLDSPGSQAQSAPN. 5 C2H2-type zinc fingers span residues 329–354, 360–384, 390–412, 418–440, and 449–472; these read MPCD…KYQH, FCCP…VKLH, YICE…RRIH, LQCE…RRKH, and FPCE…SKSH. Residue serine 471 is modified to Phosphoserine. A disordered region spans residues 478 to 533; that stretch reads VQESPGSLGSSPSISAPEPLQSPEGTSFSTSYDSNPAPSTSISSPGVPAPRNTEKS. The span at 481-492 shows a compositional bias: low complexity; the sequence is SPGSLGSSPSIS. The span at 500–521 shows a compositional bias: polar residues; that stretch reads PEGTSFSTSYDSNPAPSTSISS.

It belongs to the krueppel C2H2-type zinc-finger protein family. In terms of processing, phosphorylation at Ser-471 results in loss of DNA-binding activity.

It localises to the nucleus. Functionally, may act as an transcriptional repressor for PCK1 gene expression, in turns may participate in the hepatic gluconeogenesis regulation through the activated AMPK signaling pathway. This chain is Zinc finger protein 692, found in Rattus norvegicus (Rat).